We begin with the raw amino-acid sequence, 569 residues long: MTDRKTNLPEEPIFEEAEDDGCPSIENSSHLSVPTVEENKDFSEYNGEEAEEVVVPEKPASAYATVSIMCLCMAFGGFMSGWDTGTISGFVNQTDFLRRFGNYSHSKNTYYLSNVRTGLIVSIFNVGSAIGCLFLSKLGDIYGRCMGLIIVIVVYMVGIVIQIASIDKWYQYFIGRIIAGIGAGSISVLAPMLISETAPKHIRGTLLACWQLMVTFAIFLGYCTNYGTKTYSNSVQWRVPLGLCFAWAIIMIGGMTFVPESPRFLVQVGKIEQAKASFAKSNKLSVDDPAVVAEIDLLVAGVEAEEAMGTASWKELFSRKTKVFQRLTMTVMINSLQQLTGDNYFFYYGTTIFKSVGMNDSFETSIVLGIVNFASCFFSLYSVDKLGRRRCLLLGAATMTACMVIYASVGVTRLYPNGKSEPSSKGAGNCTIVFTCFYIFCFSCTWGPVCYVIISETFPLRVRSKCMSVATAANLLWGFLIGFFTPFITSAINFYYGYVFMGCLAFSYFYVFFFVPETKGLTLEEVDEMWMDGVLPWKSESWVPASRRDGDYDNEKLQHDEKPFYKRMF.

Residues methionine 1–glutamate 38 form a disordered region. Residues methionine 1–serine 61 are Cytoplasmic-facing. Residues proline 12–glycine 21 are compositionally biased toward acidic residues. A helical transmembrane segment spans residues alanine 62–tryptophan 82. Residues aspartate 83–glycine 118 are Extracellular-facing. N-linked (GlcNAc...) asparagine glycosylation is found at asparagine 92 and asparagine 102. A helical membrane pass occupies residues leucine 119–glycine 139. Residues aspartate 140–cysteine 145 lie on the Cytoplasmic side of the membrane. The chain crosses the membrane as a helical span at residues methionine 146–isoleucine 166. Residues aspartate 167–arginine 176 are Extracellular-facing. The chain crosses the membrane as a helical span at residues isoleucine 177–threonine 197. At alanine 198–arginine 203 the chain is on the cytoplasmic side. A helical transmembrane segment spans residues glycine 204–threonine 224. At asparagine 225–arginine 238 the chain is on the extracellular side. The chain crosses the membrane as a helical span at residues valine 239–proline 259. Over glutamate 260 to aspartate 342 the chain is Cytoplasmic. Residues asparagine 343–asparagine 359 traverse the membrane as a helical segment. The Extracellular portion of the chain corresponds to aspartate 360–serine 365. The chain crosses the membrane as a helical span at residues isoleucine 366–valine 383. At aspartate 384–arginine 390 the chain is on the cytoplasmic side. The chain crosses the membrane as a helical span at residues cysteine 391–valine 411. Residues threonine 412 to valine 433 are Extracellular-facing. Asparagine 429 is a glycosylation site (N-linked (GlcNAc...) asparagine). Residues phenylalanine 434–isoleucine 454 form a helical membrane-spanning segment. Residues serine 455–threonine 471 are Cytoplasmic-facing. Residues alanine 472 to isoleucine 492 form a helical membrane-spanning segment. Position 493 (asparagine 493) is a topological domain, extracellular. Residues phenylalanine 494–phenylalanine 514 traverse the membrane as a helical segment. Over valine 515 to phenylalanine 569 the chain is Cytoplasmic.

Belongs to the major facilitator superfamily. Sugar transporter (TC 2.A.1.1) family.

The protein localises to the membrane. Functionally, probable glucose transporter. This chain is Hexose transporter HXT8 (HXT8), found in Saccharomyces cerevisiae (strain ATCC 204508 / S288c) (Baker's yeast).